We begin with the raw amino-acid sequence, 455 residues long: Nuclear receptor subfamily 6 group A member 1-B (455 aa).

A DNA-binding region (nuclear receptor) is located at residues 38–113 (ERWCLICGDR…MGMNRKAIRE (76 aa)). 2 NR C4-type zinc fingers span residues 41 to 61 (CLIC…CEGC) and 77 to 96 (CNRD…CQYC). The interval 145-173 (EGSDLSDSWSHGYSNHSSPGNSLSEGGQS) is disordered. Positions 149 to 165 (LSDSWSHGYSNHSSPGN) are enriched in polar residues. The 232-residue stretch at 215 to 446 (QTHTLTGQIL…YSCTTNQNPW (232 aa)) folds into the NR LBD domain.

The protein belongs to the nuclear hormone receptor family. NR6 subfamily. As to quaternary structure, homodimer.

Its subcellular location is the nucleus. Functionally, probable orphan nuclear receptor. Binds to a response element containing repeats of the motif 5'-AGGTCA-3'. This Danio rerio (Zebrafish) protein is Nuclear receptor subfamily 6 group A member 1-B.